A 309-amino-acid chain; its full sequence is UDP-N-acetylenolpyruvoylglucosamine reductase (309 aa).

The FAD-binding PCMH-type domain maps to 34-221 (RVGGPAQVLF…TAAREAAQPI (188 aa)). R179 is an active-site residue. S228 (proton donor) is an active-site residue. E298 is an active-site residue.

The protein belongs to the MurB family. It depends on FAD as a cofactor.

The protein resides in the cytoplasm. It carries out the reaction UDP-N-acetyl-alpha-D-muramate + NADP(+) = UDP-N-acetyl-3-O-(1-carboxyvinyl)-alpha-D-glucosamine + NADPH + H(+). It functions in the pathway cell wall biogenesis; peptidoglycan biosynthesis. Cell wall formation. This Methylorubrum extorquens (strain PA1) (Methylobacterium extorquens) protein is UDP-N-acetylenolpyruvoylglucosamine reductase.